We begin with the raw amino-acid sequence, 206 residues long: CASP-like protein 2C1 (206 aa).

Residues 1–31 (MSVLGVGPRTVTPHLRKGMMESSSGISLARA) lie on the Cytoplasmic side of the membrane. A helical membrane pass occupies residues 32 to 52 (EAFLRLFAILVLVLTACLLGF). The Extracellular segment spans residues 53–71 (DTQTKLLFSTIKKTATFRD). A helical membrane pass occupies residues 72–92 (LGALQVVVYVDSVAAGYNLLQ). The Cytoplasmic segment spans residues 93-111 (LGRGFISAKLKGKLINVSY). The chain crosses the membrane as a helical span at residues 112–132 (VTLPWVCFLLDQAAVYTVFSA). Residues 133–161 (NTAALQASIIAVTGESSLQWMKVCNRYTR) are Extracellular-facing. A helical transmembrane segment spans residues 162 to 182 (FCIQVGGALLSGYLASLLMVL). The Cytoplasmic segment spans residues 183–206 (LSSLSAFSLFRLYSPKQFHLLKPT).

Belongs to the Casparian strip membrane proteins (CASP) family. In terms of assembly, homodimer and heterodimers.

The protein localises to the cell membrane. The sequence is that of CASP-like protein 2C1 from Vitis vinifera (Grape).